The primary structure comprises 239 residues: Uridylate kinase (239 aa).

10–13 (KISG) contacts ATP. The involved in allosteric activation by GTP stretch occupies residues 18–23 (GESGYG). Position 52 (G52) interacts with UMP. G53 and R57 together coordinate ATP. UMP-binding positions include D72 and 133 to 140 (TGNPYFTT). ATP-binding residues include T160, Y166, and D169.

The protein belongs to the UMP kinase family. Homohexamer.

Its subcellular location is the cytoplasm. The catalysed reaction is UMP + ATP = UDP + ADP. The protein operates within pyrimidine metabolism; CTP biosynthesis via de novo pathway; UDP from UMP (UMPK route): step 1/1. Its activity is regulated as follows. Allosterically activated by GTP. Inhibited by UTP. In terms of biological role, catalyzes the reversible phosphorylation of UMP to UDP. The polypeptide is Uridylate kinase (Chlorobaculum tepidum (strain ATCC 49652 / DSM 12025 / NBRC 103806 / TLS) (Chlorobium tepidum)).